The sequence spans 260 residues: Adenosylcobinamide-GDP ribazoletransferase (260 aa).

A run of 8 helical transmembrane segments spans residues 3-23, 36-56, 60-80, 108-128, 133-153, 180-200, 206-226, and 239-259; these read APLW…LPAW, FAPW…LVLI, WPTS…SGGL, VGAS…AALL, LAPL…LWAM, ALPA…LMIV, MVLM…PELL, and GASV…LLTA.

The protein belongs to the CobS family. It depends on Mg(2+) as a cofactor.

The protein resides in the cell inner membrane. It carries out the reaction alpha-ribazole + adenosylcob(III)inamide-GDP = adenosylcob(III)alamin + GMP + H(+). It catalyses the reaction alpha-ribazole 5'-phosphate + adenosylcob(III)inamide-GDP = adenosylcob(III)alamin 5'-phosphate + GMP + H(+). It functions in the pathway cofactor biosynthesis; adenosylcobalamin biosynthesis; adenosylcobalamin from cob(II)yrinate a,c-diamide: step 7/7. Its function is as follows. Joins adenosylcobinamide-GDP and alpha-ribazole to generate adenosylcobalamin (Ado-cobalamin). Also synthesizes adenosylcobalamin 5'-phosphate from adenosylcobinamide-GDP and alpha-ribazole 5'-phosphate. The polypeptide is Adenosylcobinamide-GDP ribazoletransferase (Prochlorococcus marinus (strain MIT 9303)).